A 163-amino-acid polypeptide reads, in one-letter code: Protein-export protein SecB (163 aa).

It belongs to the SecB family. In terms of assembly, homotetramer, a dimer of dimers. One homotetramer interacts with 1 SecA dimer.

It is found in the cytoplasm. One of the proteins required for the normal export of preproteins out of the cell cytoplasm. It is a molecular chaperone that binds to a subset of precursor proteins, maintaining them in a translocation-competent state. It also specifically binds to its receptor SecA. This is Protein-export protein SecB from Caulobacter vibrioides (strain ATCC 19089 / CIP 103742 / CB 15) (Caulobacter crescentus).